The following is a 334-amino-acid chain: 3-ketodihydrosphingosine reductase (334 aa).

The first 20 residues, 1–20 (MIIYILFSLLAAVIVHLVYK), serve as a signal peptide directing secretion. Residues Gly-36, Ser-38, Ser-39, Gly-40, Arg-62, Lys-66, Asp-100, and Ile-101 each contribute to the NADPH site. The GXSXG motif lies at 36–40 (GGSSG). The Proton donor role is filled by Ser-182. Tyr-196 (proton acceptor) is an active-site residue. Tyr-196 and Lys-200 together coordinate NADP(+). Catalysis depends on Lys-200, which acts as the Lowers pKa of active site Tyr.

Belongs to the short-chain dehydrogenases/reductases (SDR) family.

The protein localises to the endoplasmic reticulum. The enzyme catalyses sphinganine + NADP(+) = 3-oxosphinganine + NADPH + H(+). Its pathway is lipid metabolism; sphingolipid metabolism. In terms of biological role, catalyzes the reduction of 3'-oxosphinganine (3-ketodihydrosphingosine/KDS) to sphinganine (dihydrosphingosine/DHS), the second step of de novo sphingolipid biosynthesis. In Dictyostelium discoideum (Social amoeba), this protein is 3-ketodihydrosphingosine reductase (ksrA-1).